The primary structure comprises 201 residues: Glycerol-3-phosphate acyltransferase (201 aa).

A run of 5 helical transmembrane segments spans residues 4–24 (LVAA…LVLT), 55–75 (LATL…VWVL), 80–100 (MVPV…WLGF), 110–130 (IGTL…TWLV), and 152–174 (FALY…MGFY).

The protein belongs to the PlsY family. As to quaternary structure, probably interacts with PlsX.

The protein resides in the cell inner membrane. It catalyses the reaction an acyl phosphate + sn-glycerol 3-phosphate = a 1-acyl-sn-glycero-3-phosphate + phosphate. The protein operates within lipid metabolism; phospholipid metabolism. In terms of biological role, catalyzes the transfer of an acyl group from acyl-phosphate (acyl-PO(4)) to glycerol-3-phosphate (G3P) to form lysophosphatidic acid (LPA). This enzyme utilizes acyl-phosphate as fatty acyl donor, but not acyl-CoA or acyl-ACP. The polypeptide is Glycerol-3-phosphate acyltransferase (Paramagnetospirillum magneticum (strain ATCC 700264 / AMB-1) (Magnetospirillum magneticum)).